Here is a 175-residue protein sequence, read N- to C-terminus: Gamma-crystallin B (175 aa).

2 consecutive Beta/gamma crystallin 'Greek key' domains span residues G2–S40 and G41–P83. The connecting peptide stretch occupies residues Q84–T88. Beta/gamma crystallin 'Greek key' domains lie at F89–D129 and G130–M172.

It belongs to the beta/gamma-crystallin family. Monomer.

Its function is as follows. Crystallins are the dominant structural components of the vertebrate eye lens. This is Gamma-crystallin B (CRYGB) from Canis lupus familiaris (Dog).